A 296-amino-acid chain; its full sequence is Protoheme IX farnesyltransferase (296 aa).

9 helical membrane-spanning segments follow: residues 13 to 33 (IIFG…KGII), 35 to 55 (YPLF…GCVF), 84 to 104 (VTLI…YIAA), 107 to 127 (LAMW…SLYM), 132 to 152 (VYGT…GYCA), 162 to 182 (LILL…IAIF), 208 to 228 (ITLY…VGYA), 229 to 249 (GYKY…MALR), and 264 to 284 (FVFS…DFSV).

Belongs to the UbiA prenyltransferase family. Protoheme IX farnesyltransferase subfamily.

The protein localises to the cell inner membrane. The enzyme catalyses heme b + (2E,6E)-farnesyl diphosphate + H2O = Fe(II)-heme o + diphosphate. The protein operates within porphyrin-containing compound metabolism; heme O biosynthesis; heme O from protoheme: step 1/1. Functionally, converts heme B (protoheme IX) to heme O by substitution of the vinyl group on carbon 2 of heme B porphyrin ring with a hydroxyethyl farnesyl side group. The sequence is that of Protoheme IX farnesyltransferase from Edwardsiella ictaluri (strain 93-146).